The following is a 339-amino-acid chain: Sphingomyelinase D (339 aa).

The N-terminal stretch at 1–21 (MVSLLRLCSFLLAAGSILVQG) is a signal peptide. The active site involves His60. Mg(2+) contacts are provided by Glu80, Asp82, and Asp128. An SMD-tail motif is present at residues 309–316 (ATVDDNPW). The disordered stretch occupies residues 313 to 339 (DNPWSSMSKKGSSKSSWVKGEVPSIAH). Residues 317–328 (SSMSKKGSSKSS) show a composition bias toward low complexity.

It belongs to the sphingomyelinase D/phospholipase D family. Requires Mg(2+) as cofactor.

It is found in the secreted. The enzyme catalyses a sphingomyelin + H2O = an N-acylsphing-4-enine 1-phosphate + choline + H(+). In terms of biological role, catalyzes the hydrolysis of sphingomyelin. Sphingomyelinases D are produced by some spider in their venoms, but also by arthropods such as ticks, or pathogenic bacteria and fungi. They might play a role in pathogenicity through different mechanisms, such as membrane destabilization and host cell penetration, but also pulmonary inflammation and cutaneous lesions. The chain is Sphingomyelinase D from Arthroderma benhamiae (strain ATCC MYA-4681 / CBS 112371) (Trichophyton mentagrophytes).